Here is a 351-residue protein sequence, read N- to C-terminus: Anaerobic nitrite reductase Glb1-2 (351 aa).

Globin domains follow at residues 13-162 (DFTE…VEMK) and 184-333 (CFTE…AEMK). Residues serine 56, lysine 70, histidine 74, lysine 104, threonine 108, histidine 109, serine 227, lysine 241, histidine 245, lysine 275, threonine 279, and histidine 280 each coordinate heme b. Positions 331 to 351 (EMKKTDHDHQTNVEDKSKPSS) are disordered.

Belongs to the plant globin family. In terms of assembly, monomer. Heme b is required as a cofactor. Predominantly expressed in nodules and roots, and, to a lesser extent, in leaves, at low levels in pods, but barely in stems, petioles, buds and flowers. In terms of tissue distribution, mainly expressed in nodules and roots at low levels, and barely in leaves. As to expression, expressed at very low levels in nodules, roots and pods.

It localises to the cytoplasm. Its subcellular location is the nucleus. The enzyme catalyses Fe(III)-heme b-[protein] + nitric oxide + H2O = Fe(II)-heme b-[protein] + nitrite + 2 H(+). In terms of biological role, phytoglobin that regulates the fine tuning of nitric oxide (NO) concentration in the cytosol in response to sudden changes in O(2) availability, and performs both symbiotic and nonsymbiotic functions. Exhibits NO dioxygenase activity in the presence of O(2) but nitrite reductase (NiR) activity in the absence of O(2) (e.g. during flooding or in waterlogged soil). May not function as an oxygen storage or transport protein. Extremely reactive toward the physiological ligands O(2), nitric oxide (NO), and nitrite with a very high affinity for O(2) through an hexacoordinate heme iron because of a very low dissociation constant. Functionally, very high affinity for O(2) through two hexacoordinate heme irons. Extremely reactive toward the physiological ligands O(2), nitric oxide (NO), and nitrite. Its function is as follows. Very high affinity for O(2) through a single hexacoordinate heme iron. Extremely reactive toward the physiological ligands O(2), nitric oxide (NO), and nitrite. The polypeptide is Anaerobic nitrite reductase Glb1-2 (Medicago truncatula (Barrel medic)).